The following is an 846-amino-acid chain: Disks large-associated protein 5 (846 aa).

Serine 67 bears the Phosphoserine; by CDK1 mark. Positions 90 to 120 (RKQMLQKYKEEKQLQKLKEQREKAKRGIFKV) form a coiled coil. The tract at residues 153 to 284 (TRSKAKDQME…TNATSGMNPD (132 aa)) is disordered. Composition is skewed to basic and acidic residues over residues 156–174 (KAKD…DVRA) and 182–194 (TSEK…EKKV). Serine 202 carries the post-translational modification Phosphoserine. Polar residues predominate over residues 203-225 (LRMTRSATQAAKQVPRTVSSTTA). Positions 250 to 266 (KNVETKPDKGISCKVDS) are enriched in basic and acidic residues. Polar residues predominate over residues 269–281 (NTLNSQTNATSGM). Threonine 326 bears the Phosphothreonine mark. Phosphothreonine; by CDK1 is present on threonine 329. Residue threonine 338 is modified to Phosphothreonine. A Glycyl lysine isopeptide (Lys-Gly) (interchain with G-Cter in SUMO2) cross-link involves residue lysine 347. Phosphothreonine; by CDK1 is present on residues threonine 401 and threonine 402. Serine 618 is subject to Phosphoserine; by CDK1. Serine 627 bears the Phosphoserine; by AURKA mark. Polar residues predominate over residues 628 to 671 (VSSEGPSQRLGTPKSVNKAVSQSRNEMGIPQQTTSPENAGPQNT). The interval 628-674 (VSSEGPSQRLGTPKSVNKAVSQSRNEMGIPQQTTSPENAGPQNTKSE) is disordered. Phosphoserine is present on residues serine 629 and serine 634. Threonine 639 bears the Phosphothreonine; by CDK1 mark. Serine 642 is modified (phosphoserine; by CDK1). Serine 662 is modified (phosphoserine). 2 positions are modified to phosphoserine; by AURKA: serine 725 and serine 757. Phosphothreonine; by CDK1 is present on threonine 759. A phosphoserine mark is found at serine 774 and serine 777. The residue at position 784 (threonine 784) is a Phosphothreonine. Residues serine 806 and serine 812 each carry the phosphoserine modification. Position 830 is a phosphoserine; by AURKA (serine 830). At serine 839 the chain carries Phosphoserine; by CDK1.

It belongs to the SAPAP family. Interacts with CDK1. Interacts with the C-terminal proline-rich region of FBXO7. Recruited by FBXO7 to a SCF (SKP1-CUL1-F-box) protein complex in a CDK1/Cyclin B-phosphorylation dependent manner. Interacts with CDH1. Post-translationally, ubiquitinated, leading to its degradation. Decreased phosphorylation levels are associated with the differentiation of intestinal epithelial cells. Abundantly expressed in fetal liver. Expressed at lower levels in bone marrow, testis, colon, and placenta.

Its subcellular location is the nucleus. The protein localises to the cytoplasm. The protein resides in the cytoskeleton. It localises to the spindle. Its function is as follows. Potential cell cycle regulator that may play a role in carcinogenesis of cancer cells. Mitotic phosphoprotein regulated by the ubiquitin-proteasome pathway. Key regulator of adherens junction integrity and differentiation that may be involved in CDH1-mediated adhesion and signaling in epithelial cells. In Homo sapiens (Human), this protein is Disks large-associated protein 5 (DLGAP5).